Reading from the N-terminus, the 348-residue chain is N-acetyl-gamma-glutamyl-phosphate reductase (348 aa).

Residue Cys150 is part of the active site.

Belongs to the NAGSA dehydrogenase family. Type 1 subfamily.

It localises to the cytoplasm. The enzyme catalyses N-acetyl-L-glutamate 5-semialdehyde + phosphate + NADP(+) = N-acetyl-L-glutamyl 5-phosphate + NADPH + H(+). It participates in amino-acid biosynthesis; L-arginine biosynthesis; N(2)-acetyl-L-ornithine from L-glutamate: step 3/4. Its function is as follows. Catalyzes the NADPH-dependent reduction of N-acetyl-5-glutamyl phosphate to yield N-acetyl-L-glutamate 5-semialdehyde. In Symbiobacterium thermophilum (strain DSM 24528 / JCM 14929 / IAM 14863 / T), this protein is N-acetyl-gamma-glutamyl-phosphate reductase.